The chain runs to 505 residues: Surface lipoprotein assembly modifier 2 (505 aa).

Residues 1 to 19 (MLYFRYGFLVVWCAAGVSA) form the signal peptide. Residues 23–188 (ADAPAILDDK…RFRKKTEGLT (166 aa)) form an N-terminal domain region. Residues 189-505 (GWRFSGGISP…EVFVSADWRF (317 aa)) are C-terminal probable beta barrel. The next 14 beta stranded transmembrane spans lie at 190–200 (WRFSGGISPAV), 232–243 (LNYEIEAEKLTP), 248–258 (HYLLFRSNIGG), 273–283 (FGRAYLGWQYK), 287–297 (QTAGILPFYQV), 326–335 (VGVQLSHTYR), 340–350 (WQFSVALEHYR), 368–377 (GFYVSSAKRL), 381–391 (ATVFGGWQFVR), 411–420 (NGVYAGWAQE), 427–437 (LNSRVSASYAR), 456–465 (WNVSLALSHD), 472–482 (IVPALNYRFGR), and 495–505 (SEVFVSADWRF).

The protein belongs to the Slam family.

The protein localises to the cell outer membrane. Its function is as follows. Required for correct export to the cell surface of cell outer membrane lipoprotein HpuA heterologously in E.coli (hpuA does not exist in N.meningitidis strain MC58). This chain is Surface lipoprotein assembly modifier 2, found in Neisseria meningitidis serogroup B (strain ATCC BAA-335 / MC58).